The following is an 87-amino-acid chain: ParB-like nuclease domain-containing protein YnaK (87 aa).

This is ParB-like nuclease domain-containing protein YnaK (ynaK) from Escherichia coli (strain K12).